The following is a 246-amino-acid chain: MHPEKLQAYVLSTLDYGDSDRIVALFTLEHGRIKAFARRARNSRRRFGAALEIFARIEAHVEIKQGGLSGLRQAEIDCIYPGIRGDLGRIAYALYACELVDAMTPEGHPLPRLFRLLAAYLDRLEAYPASEQERRFFEINLLNILGYRPSLEACSRCGTPFDDRGALLLDDGELVCRACTGHGRDMTQVTLGRMLACLKTGTFGLIHFPDEAQAQTGSALDRALAFHAGHRLKSLEFLRQISNENQ.

The protein belongs to the RecO family.

Its function is as follows. Involved in DNA repair and RecF pathway recombination. This is DNA repair protein RecO from Pelobacter propionicus (strain DSM 2379 / NBRC 103807 / OttBd1).